Here is a 165-residue protein sequence, read N- to C-terminus: Putative BTB/POZ domain-containing protein At2g40440 (165 aa).

The BTB domain occupies 24–98; the sequence is VDVRLKAGDS…IYSDGSMLSA (75 aa).

Its pathway is protein modification; protein ubiquitination. May act as a substrate-specific adapter of an E3 ubiquitin-protein ligase complex (CUL3-RBX1-BTB) which mediates the ubiquitination and subsequent proteasomal degradation of target proteins. The polypeptide is Putative BTB/POZ domain-containing protein At2g40440 (Arabidopsis thaliana (Mouse-ear cress)).